A 136-amino-acid polypeptide reads, in one-letter code: Nucleoside diphosphate kinase (136 aa).

Residues lysine 10, phenylalanine 58, arginine 86, threonine 92, arginine 104, and asparagine 114 each contribute to the ATP site. Catalysis depends on histidine 117, which acts as the Pros-phosphohistidine intermediate.

The protein belongs to the NDK family. As to quaternary structure, homotetramer. Mg(2+) is required as a cofactor.

Its subcellular location is the cytoplasm. It carries out the reaction a 2'-deoxyribonucleoside 5'-diphosphate + ATP = a 2'-deoxyribonucleoside 5'-triphosphate + ADP. The catalysed reaction is a ribonucleoside 5'-diphosphate + ATP = a ribonucleoside 5'-triphosphate + ADP. Major role in the synthesis of nucleoside triphosphates other than ATP. The ATP gamma phosphate is transferred to the NDP beta phosphate via a ping-pong mechanism, using a phosphorylated active-site intermediate. This is Nucleoside diphosphate kinase from Mycobacteroides abscessus (strain ATCC 19977 / DSM 44196 / CCUG 20993 / CIP 104536 / JCM 13569 / NCTC 13031 / TMC 1543 / L948) (Mycobacterium abscessus).